The chain runs to 202 residues: MFITFEGIDGSGKTTQSHLLAEYLSEIYGVNNVVLTREPGGTLLNESVRNLLFKAQGLDSLSELLFFIAMRREHFVKIIKPSLMQKKIVICDRFIDSTIAYQGYGQGIDCSLIDQLNDLVIDVYPDITFIIDVDINESLSRSCKNGYEFADMEFYYRVRDGFYDIAKKNPHRCHVITDKSETYDIDDINFVHLEVIKVLQMV.

7 to 14 (GIDGSGKT) serves as a coordination point for ATP.

This sequence belongs to the thymidylate kinase family.

The catalysed reaction is dTMP + ATP = dTDP + ADP. Phosphorylation of dTMP to form dTDP in both de novo and salvage pathways of dTTP synthesis. This chain is Thymidylate kinase, found in Ehrlichia chaffeensis (strain ATCC CRL-10679 / Arkansas).